Consider the following 155-residue polypeptide: MLP-like protein 423 (155 aa).

Belongs to the MLP family.

The sequence is that of MLP-like protein 423 (MLP423) from Arabidopsis thaliana (Mouse-ear cress).